A 345-amino-acid chain; its full sequence is MDGEDIPDFSSLKEETAYWKELSLKYKQTFQEARDELVEFQEGSRELEAELEAQLVQAEQRNRDLQADNQRLKYEVEALKEKLEHQYAQSYKQVSVLEDDLSQTRAIKEQLHKYVRELEQANDDLERAKRATIVSLEDFEQRLNQAIERNAFLESELDEKESLLVSVQRLKDEARDLRQELAVRERQQEVTRKSAPSSPTLDCEKMDSAVQASLSLPATPVGKGTENSFPSPKAIPNGFGTSPLTPSARISALNIVGDLLRKVGALESKLAACRNFAKDQASRKSYISGNVNCGVMNSNGTKFSRSGHTSFFDKGAVNGFDPAPPPPGLGSSRPLSAPGMLPLSV.

Residues 27–190 adopt a coiled-coil conformation; the sequence is KQTFQEARDE…LAVRERQQEV (164 aa). The self-association stretch occupies residues 56–166; the sequence is VQAEQRNRDL…LDEKESLLVS (111 aa). Positions 64–189 are interaction with KATNB1; that stretch reads DLQADNQRLK…ELAVRERQQE (126 aa). Residues 114 to 133 are required for interaction with PAFAH1B1; that stretch reads YVRELEQANDDLERAKRATI. The interval 175 to 345 is interaction with CENPF; it reads RDLRQELAVR…SAPGMLPLSV (171 aa). An interaction with YWHAE region spans residues 189–256; that stretch reads EVTRKSAPSS…SARISALNIV (68 aa). Residues 191 to 345 form an interaction with NEFL region; it reads TRKSAPSSPT…SAPGMLPLSV (155 aa). Positions 195–256 are interaction with KATNA1; that stretch reads APSSPTLDCE…SARISALNIV (62 aa). Position 215 is a phosphoserine (serine 215). Residues 217–240 form a disordered region; it reads PATPVGKGTENSFPSPKAIPNGFG. Threonine 219 carries the phosphothreonine; by CDK1 and MAPK1 modification. Positions 227 to 278 are interaction with DISC1; that stretch reads NSFPSPKAIPNGFGTSPLTPSARISALNIVGDLLRKVGALESKLAACRNFAK. A Phosphoserine modification is found at serine 231. A Phosphoserine; by CDK1 modification is found at serine 242. Residue threonine 245 is modified to Phosphothreonine; by CDK1 and MAPK1. Positions 256–291 are required for localization to the centrosome and interaction with dynein, dynactin, tubulin gamma, PCM1 and PCNT; the sequence is VGDLLRKVGALESKLAACRNFAKDQASRKSYISGNV. Cysteine 273 carries the S-palmitoyl cysteine; by ZDHHC2, ZDHHC3 and ZDHHC7 lipid modification. Positions 316-345 are disordered; the sequence is AVNGFDPAPPPPGLGSSRPLSAPGMLPLSV. Residues 329–339 show a composition bias toward low complexity; sequence LGSSRPLSAPG. Serine 344 bears the Phosphoserine mark.

The protein belongs to the nudE family. As to quaternary structure, self-associates. Interacts with DISC1, dynein, dynactin, tubulin gamma, KATNA1, KATNB1, microtubules, PAFAH1B1, PCM1, PCNT, and YWHAE. Interacts directly with NEFL and indirectly with NEFH. Interacts (via C-terminus) with CENPF. Interacts with ZNF365. Interacts with PLEKHM1 (via N- and C-terminus). Interacts with GTP-bound RAB9A; the interaction may lead to RAB9A-dynein motor tethering. In terms of processing, phosphorylated in mitosis. Can be phosphorylated by CDK1, CDK5 and MAPK1. Phosphorylation by CDK5 promotes interaction with KATNA1 and YWHAE. Palmitoylation at Cys-273 reduces affinity for dynein. Expressed at low levels in heart, hypothalamus, liver, lung, spleen and stomach. Expressed at higher levels in testis and brain. Within the brain, expressed in cerebellum, cerebral stem, cortex and striatum.

Its subcellular location is the cytoplasm. The protein localises to the cytoskeleton. It localises to the microtubule organizing center. The protein resides in the centrosome. It is found in the chromosome. Its subcellular location is the centromere. The protein localises to the kinetochore. It localises to the spindle. Its function is as follows. Required for organization of the cellular microtubule array and microtubule anchoring at the centrosome. May regulate microtubule organization at least in part by targeting the microtubule severing protein KATNA1 to the centrosome. Also positively regulates the activity of the minus-end directed microtubule motor protein dynein. May enhance dynein-mediated microtubule sliding by targeting dynein to the microtubule plus ends. Required for several dynein- and microtubule-dependent processes such as the maintenance of Golgi integrity, the centripetal motion of secretory vesicles and the coupling of the nucleus and centrosome. Also required during brain development for the migration of newly formed neurons from the ventricular/subventricular zone toward the cortical plate. Plays a role, together with DISC1, in the regulation of neurite outgrowth. Required for mitosis in some cell types but appears to be dispensible for mitosis in cortical neuronal progenitors, which instead requires NDE1. Facilitates the polymerization of neurofilaments from the individual subunits NEFH and NEFL. Positively regulates lysosome peripheral distribution and ruffled border formation in osteoclasts. Plays a role, together with DISC1, in the regulation of neurite outgrowth. May act as a RAB9A/B effector that tethers RAB9-associated late endosomes to the dynein motor for their retrograde transport to the trans-Golgi network. The polypeptide is Nuclear distribution protein nudE-like 1 (NDEL1) (Oryctolagus cuniculus (Rabbit)).